A 418-amino-acid chain; its full sequence is Serine/threonine-protein kinase Sgk1 (418 aa).

The interval 50–78 (PQEPELLNENSSPPPSPSQQINLGPSSNP) is disordered. A compositionally biased stretch (polar residues) spans 68-78 (QQINLGPSSNP). The 258-residue stretch at 85–342 (FQFLKIIGKG…FMEIKNHMFF (258 aa)) folds into the Protein kinase domain. Residues 91-99 (IGKGSFGKV) and Lys-114 contribute to the ATP site. Asp-209 (proton acceptor) is an active-site residue. One can recognise an AGC-kinase C-terminal domain in the interval 343-418 (SPINWDDLIN…SYAPPMESYL (76 aa)).

This sequence belongs to the protein kinase superfamily. AGC Ser/Thr protein kinase family.

The protein resides in the cytoplasm. It localises to the nucleus. The protein localises to the endoplasmic reticulum. It carries out the reaction L-seryl-[protein] + ATP = O-phospho-L-seryl-[protein] + ADP + H(+). The catalysed reaction is L-threonyl-[protein] + ATP = O-phospho-L-threonyl-[protein] + ADP + H(+). Functionally, protein kinase that may play an important role in cellular stress response. Plays an important role in activating certain potassium, sodium, and chloride channels, suggesting an involvement in the regulation of processes such as cell survival, neuronal excitability, and renal sodium excretion. The polypeptide is Serine/threonine-protein kinase Sgk1 (sgk1) (Xenopus tropicalis (Western clawed frog)).